The following is a 421-amino-acid chain: EGFR adapter protein (421 aa).

4 disordered regions span residues 18 to 94 (TFIS…PQLQ), 109 to 154 (DVQE…RLVD), 173 to 194 (EDSR…SGCG), and 372 to 396 (PVPL…AGGT). The segment covering 21–30 (SSSSASSSSS) has biased composition (low complexity). Positions 62-89 (FFHHHHPPAHPHPPRQQPHPHSHSHPHP) are enriched in basic residues. A compositionally biased stretch (basic and acidic residues) spans 109–120 (DVQELSGQEHPH). Residues 181–194 (STCGSSLTSGSGCG) are compositionally biased toward low complexity. Residues 286 to 379 (WFQAGIPREI…LLPVPLTLPR (94 aa)) enclose the SH2 domain.

May interact (via SH2 domain) with Egfr (when phosphorylated). As to expression, detected along the wing margin, with high levels of expression in two stripes of cells on either side of the dorsal/ventral boundary and lower levels of expression in a small region at the anteroposterior boundary (at protein level). High levels of expression along two parallel stripes of cells on either side of the wing pouch dorsal/ventral boundary, and slightly lower levels of expression in a region either side of the anteroposterior boundary. Also expressed in discrete regions of the wing imaginal disk outside of the pouch. Expressed in eye imaginal disk photoreceptors with highest levels of expression in R7 photoreceptor cells.

Its function is as follows. Involved in the negative regulation of the Egfr/Ras signaling pathway. During wing morphogenesis, may function redundantly with PVRAP to inhibit Egfr activity and prevent uncontrolled cell growth. This chain is EGFR adapter protein, found in Drosophila melanogaster (Fruit fly).